A 289-amino-acid chain; its full sequence is 5'-adenylylsulfate reductase-like 7 (289 aa).

The N-terminal stretch at 1–23 is a signal peptide; sequence MNLWVSIFLVSAIAGSCLPSGFA. Residues 37-157 form the Thioredoxin domain; that stretch reads SVIEQKCPRS…LIQFYKETTG (121 aa). N-linked (GlcNAc...) asparagine glycans are attached at residues Asn-132 and Asn-184. Residues 198-218 form a helical membrane-spanning segment; the sequence is MVLALMFLSLKLAILIFPIMG.

Its subcellular location is the membrane. This is 5'-adenylylsulfate reductase-like 7 (APRL7) from Arabidopsis thaliana (Mouse-ear cress).